We begin with the raw amino-acid sequence, 152 residues long: SsrA-binding protein (152 aa).

Belongs to the SmpB family.

The protein resides in the cytoplasm. Functionally, required for rescue of stalled ribosomes mediated by trans-translation. Binds to transfer-messenger RNA (tmRNA), required for stable association of tmRNA with ribosomes. tmRNA and SmpB together mimic tRNA shape, replacing the anticodon stem-loop with SmpB. tmRNA is encoded by the ssrA gene; the 2 termini fold to resemble tRNA(Ala) and it encodes a 'tag peptide', a short internal open reading frame. During trans-translation Ala-aminoacylated tmRNA acts like a tRNA, entering the A-site of stalled ribosomes, displacing the stalled mRNA. The ribosome then switches to translate the ORF on the tmRNA; the nascent peptide is terminated with the 'tag peptide' encoded by the tmRNA and targeted for degradation. The ribosome is freed to recommence translation, which seems to be the essential function of trans-translation. The sequence is that of SsrA-binding protein from Lactobacillus helveticus (strain DPC 4571).